The following is a 239-amino-acid chain: Chaperone protein PapD (239 aa).

A signal peptide spans 1–21; sequence MIRKKILMAAIPLFVISGADA. Cys-228 and Cys-233 are joined by a disulfide.

This sequence belongs to the periplasmic pilus chaperone family. In terms of assembly, interacts with substrates PapG and PapK.

The protein localises to the periplasm. Binds and caps interactive surfaces on P pilus subunits to prevent them from participating in non-productive interactions. Facilitates the import of P pilus subunits into the periplasm, probably also facilitates their folding. Chaperone-subunit complexes are then targeted to the PapC outer membrane usher where the chaperone must uncap from the subunits. Coexpression of this chaperone with individual, otherwise toxic, P pilus subunits (tested with PapA, PapE and PapG) suppresses their growth inhibitory phenotype. This is Chaperone protein PapD (papD) from Escherichia coli.